We begin with the raw amino-acid sequence, 370 residues long: Arginine kinase (370 aa).

The Phosphagen kinase N-terminal domain occupies 6–89 (QKKYPAKDDF…FDPVIEEYHN (84 aa)). The 244-residue stretch at 115–358 (YVISSRVRTG…KVLIEMEKKL (244 aa)) folds into the Phosphagen kinase C-terminal domain. Residues 118–122 (SSRVR) and H181 contribute to the ATP site. E222 is a substrate binding site. Residue R226 coordinates ATP. Substrate is bound at residue C274. ATP is bound by residues 283 to 287 (RCSVH) and 311 to 316 (RGTSGE). E316 serves as a coordination point for substrate.

Belongs to the ATP:guanido phosphotransferase family. In terms of assembly, homodimer. Post-translationally, the N-terminus is blocked.

It catalyses the reaction L-arginine + ATP = N(omega)-phospho-L-arginine + ADP + H(+). The polypeptide is Arginine kinase (AK) (Stichopus japonicus (Sea cucumber)).